The sequence spans 1357 residues: DNA-directed RNA polymerase subunit beta (1357 aa).

It belongs to the RNA polymerase beta chain family. In terms of assembly, the RNAP catalytic core consists of 2 alpha, 1 beta, 1 beta' and 1 omega subunit. When a sigma factor is associated with the core the holoenzyme is formed, which can initiate transcription.

The enzyme catalyses RNA(n) + a ribonucleoside 5'-triphosphate = RNA(n+1) + diphosphate. Functionally, DNA-dependent RNA polymerase catalyzes the transcription of DNA into RNA using the four ribonucleoside triphosphates as substrates. The polypeptide is DNA-directed RNA polymerase subunit beta (Hahella chejuensis (strain KCTC 2396)).